The primary structure comprises 208 residues: Cytochrome c oxidase assembly protein CtaG (208 aa).

Topologically, residues 1–19 (MKQRPTGPDTTPRNRRGFG) are cytoplasmic. Residues 20–42 (RDTAVASVCGLVVALMVGASYAA) form a helical; Signal-anchor for type II membrane protein membrane-spanning segment. The Periplasmic portion of the chain corresponds to 43–208 (VPFYNWFCRV…SEAGPRQGAL (166 aa)).

It belongs to the COX11/CtaG family.

Its subcellular location is the cell inner membrane. Exerts its effect at some terminal stage of cytochrome c oxidase synthesis, probably by being involved in the insertion of the copper B into subunit I. In Rhodopseudomonas palustris (strain BisA53), this protein is Cytochrome c oxidase assembly protein CtaG.